A 587-amino-acid chain; its full sequence is Zinc finger protein 69 (587 aa).

Positions 42–128 (NGTQQESLAD…TPGTTAAGSQ (87 aa)) are disordered. In terms of domain architecture, KRAB spans 76–147 (HDEATPGTPA…VDLSQEEWGQ (72 aa)). C2H2-type zinc fingers lie at residues 271–293 (HKKK…ILEQ), 299–321 (KPAR…CMRA), 327–349 (NVCE…HTGE), 355–377 (KECG…HTGE), 383–405 (EECG…HTGE), 411–433 (DKCQ…HSGE), 439–461 (SECG…HTGE), 467–489 (TSCC…HTGE), and 495–517 (KECG…HTGV). Residues 564-587 (SRHQKIHRRNTFRDDPGHENKRQL) are disordered. Basic and acidic residues predominate over residues 574 to 587 (TFRDDPGHENKRQL).

Belongs to the krueppel C2H2-type zinc-finger protein family.

The protein resides in the nucleus. Putative transcription factor that appears to regulate lipid metabolism. This chain is Zinc finger protein 69, found in Mus musculus (Mouse).